The following is a 346-amino-acid chain: Histidinol-phosphate aminotransferase (346 aa).

Lys-209 bears the N6-(pyridoxal phosphate)lysine mark.

The protein belongs to the class-II pyridoxal-phosphate-dependent aminotransferase family. Histidinol-phosphate aminotransferase subfamily. Homodimer. The cofactor is pyridoxal 5'-phosphate.

It carries out the reaction L-histidinol phosphate + 2-oxoglutarate = 3-(imidazol-4-yl)-2-oxopropyl phosphate + L-glutamate. Its pathway is amino-acid biosynthesis; L-histidine biosynthesis; L-histidine from 5-phospho-alpha-D-ribose 1-diphosphate: step 7/9. This chain is Histidinol-phosphate aminotransferase, found in Flavobacterium psychrophilum (strain ATCC 49511 / DSM 21280 / CIP 103535 / JIP02/86).